A 493-amino-acid chain; its full sequence is 3-octaprenyl-4-hydroxybenzoate carboxy-lyase (493 aa).

Asparagine 172 is a Mn(2+) binding site. Residues isoleucine 175–arginine 177, arginine 189–leucine 191, and arginine 194–glycine 195 each bind prenylated FMN. Residue glutamate 238 coordinates Mn(2+). Residue aspartate 287 is the Proton donor of the active site.

This sequence belongs to the UbiD family. As to quaternary structure, homohexamer. Requires prenylated FMN as cofactor. Mn(2+) serves as cofactor.

Its subcellular location is the cell membrane. It catalyses the reaction a 4-hydroxy-3-(all-trans-polyprenyl)benzoate + H(+) = a 2-(all-trans-polyprenyl)phenol + CO2. The protein operates within cofactor biosynthesis; ubiquinone biosynthesis. In terms of biological role, catalyzes the decarboxylation of 3-octaprenyl-4-hydroxy benzoate to 2-octaprenylphenol, an intermediate step in ubiquinone biosynthesis. The sequence is that of 3-octaprenyl-4-hydroxybenzoate carboxy-lyase from Shewanella amazonensis (strain ATCC BAA-1098 / SB2B).